The chain runs to 339 residues: Dihydroorotate dehydrogenase (quinone) (339 aa).

FMN contacts are provided by residues 61–65 (AGLDK) and T85. Residue K65 participates in substrate binding. Residue 110–114 (NRMGF) participates in substrate binding. FMN contacts are provided by N138 and N171. N171 contacts substrate. Residue S174 is the Nucleophile of the active site. N176 lines the substrate pocket. FMN is bound by residues K216 and T244. 245 to 246 (NT) serves as a coordination point for substrate. Residues G267, G296, and 317–318 (YS) contribute to the FMN site.

This sequence belongs to the dihydroorotate dehydrogenase family. Type 2 subfamily. As to quaternary structure, monomer. It depends on FMN as a cofactor.

It localises to the cell membrane. The enzyme catalyses (S)-dihydroorotate + a quinone = orotate + a quinol. It participates in pyrimidine metabolism; UMP biosynthesis via de novo pathway; orotate from (S)-dihydroorotate (quinone route): step 1/1. Catalyzes the conversion of dihydroorotate to orotate with quinone as electron acceptor. The protein is Dihydroorotate dehydrogenase (quinone) of Teredinibacter turnerae (strain ATCC 39867 / T7901).